Reading from the N-terminus, the 83-residue chain is Mu-theraphotoxin-Hhn2l (83 aa).

The signal sequence occupies residues 1–21 (MKASMFLALAGLVLLFVVGYA). The propeptide occupies 22-48 (SESEEKEFPIELLSKIFAVDVFKGEER). 3 cysteine pairs are disulfide-bonded: C50/C65, C57/C70, and C64/C77. L81 is subject to Leucine amide.

The protein belongs to the neurotoxin 10 (Hwtx-1) family. 15 (Hntx-3) subfamily. In terms of assembly, monomer. Expressed by the venom gland.

It localises to the secreted. Lethal neurotoxin. Selectively blocks tetrodotoxin-sensitive voltage-gated sodium channels (Nav). Does not affect tetrodotoxin-resistant voltage-gated sodium channels or calcium channels. This chain is Mu-theraphotoxin-Hhn2l, found in Cyriopagopus hainanus (Chinese bird spider).